Reading from the N-terminus, the 88-residue chain is Cell division topological specificity factor (88 aa).

The protein belongs to the MinE family.

Functionally, prevents the cell division inhibition by proteins MinC and MinD at internal division sites while permitting inhibition at polar sites. This ensures cell division at the proper site by restricting the formation of a division septum at the midpoint of the long axis of the cell. This is Cell division topological specificity factor from Cronobacter sakazakii (strain ATCC BAA-894) (Enterobacter sakazakii).